Reading from the N-terminus, the 614-residue chain is Dihydroxy-acid dehydratase (614 aa).

A Mg(2+)-binding site is contributed by aspartate 81. Cysteine 122 provides a ligand contact to [2Fe-2S] cluster. Aspartate 123 and lysine 124 together coordinate Mg(2+). N6-carboxylysine is present on lysine 124. Cysteine 195 is a binding site for [2Fe-2S] cluster. Position 491 (glutamate 491) interacts with Mg(2+). Catalysis depends on serine 517, which acts as the Proton acceptor.

It belongs to the IlvD/Edd family. Homodimer. It depends on [2Fe-2S] cluster as a cofactor. Mg(2+) is required as a cofactor.

It catalyses the reaction (2R)-2,3-dihydroxy-3-methylbutanoate = 3-methyl-2-oxobutanoate + H2O. The enzyme catalyses (2R,3R)-2,3-dihydroxy-3-methylpentanoate = (S)-3-methyl-2-oxopentanoate + H2O. It functions in the pathway amino-acid biosynthesis; L-isoleucine biosynthesis; L-isoleucine from 2-oxobutanoate: step 3/4. Its pathway is amino-acid biosynthesis; L-valine biosynthesis; L-valine from pyruvate: step 3/4. Its function is as follows. Functions in the biosynthesis of branched-chain amino acids. Catalyzes the dehydration of (2R,3R)-2,3-dihydroxy-3-methylpentanoate (2,3-dihydroxy-3-methylvalerate) into 2-oxo-3-methylpentanoate (2-oxo-3-methylvalerate) and of (2R)-2,3-dihydroxy-3-methylbutanoate (2,3-dihydroxyisovalerate) into 2-oxo-3-methylbutanoate (2-oxoisovalerate), the penultimate precursor to L-isoleucine and L-valine, respectively. The polypeptide is Dihydroxy-acid dehydratase (Actinobacillus succinogenes (strain ATCC 55618 / DSM 22257 / CCUG 43843 / 130Z)).